The following is a 262-amino-acid chain: ATP synthase subunit delta (262 aa).

This sequence belongs to the ATPase delta chain family. F-type ATPases have 2 components, F(1) - the catalytic core - and F(0) - the membrane proton channel. F(1) has five subunits: alpha(3), beta(3), gamma(1), delta(1), epsilon(1). F(0) has three main subunits: a(1), b(2) and c(10-14). The alpha and beta chains form an alternating ring which encloses part of the gamma chain. F(1) is attached to F(0) by a central stalk formed by the gamma and epsilon chains, while a peripheral stalk is formed by the delta and b chains.

It localises to the cell membrane. Its function is as follows. F(1)F(0) ATP synthase produces ATP from ADP in the presence of a proton or sodium gradient. F-type ATPases consist of two structural domains, F(1) containing the extramembraneous catalytic core and F(0) containing the membrane proton channel, linked together by a central stalk and a peripheral stalk. During catalysis, ATP synthesis in the catalytic domain of F(1) is coupled via a rotary mechanism of the central stalk subunits to proton translocation. This protein is part of the stalk that links CF(0) to CF(1). It either transmits conformational changes from CF(0) to CF(1) or is implicated in proton conduction. This is ATP synthase subunit delta from Tropheryma whipplei (strain TW08/27) (Whipple's bacillus).